A 472-amino-acid polypeptide reads, in one-letter code: Uronate isomerase (472 aa).

The protein belongs to the metallo-dependent hydrolases superfamily. Uronate isomerase family.

It carries out the reaction D-glucuronate = D-fructuronate. The enzyme catalyses aldehydo-D-galacturonate = keto-D-tagaturonate. The protein operates within carbohydrate metabolism; pentose and glucuronate interconversion. In Xanthomonas euvesicatoria pv. vesicatoria (strain 85-10) (Xanthomonas campestris pv. vesicatoria), this protein is Uronate isomerase.